A 341-amino-acid polypeptide reads, in one-letter code: HTH-type transcriptional repressor PurR (341 aa).

The 55-residue stretch at 2 to 56 (ATIKDVAKRANVSTTTVSHVINKTRFVAEETRNAVWAAIKELHYSPSAVARSLKV) folds into the HTH lacI-type domain. Residues 4-23 (IKDVAKRANVSTTTVSHVIN) constitute a DNA-binding region (H-T-H motif). Residues 48–56 (SAVARSLKV) mediate DNA binding. Positions 73, 190, 192, 221, and 275 each coordinate hypoxanthine.

As to quaternary structure, homodimer.

The protein operates within purine metabolism; purine nucleotide biosynthesis [regulation]. Is the main repressor of the genes involved in the de novo synthesis of purine nucleotides, regulating purB, purC, purEK, purF, purHD, purL, purMN and guaBA expression. PurR is allosterically activated to bind its cognate DNA by binding the purine corepressors, hypoxanthine or guanine, thereby effecting transcription repression. This is HTH-type transcriptional repressor PurR from Klebsiella pneumoniae (strain 342).